The primary structure comprises 137 residues: Nucleoside diphosphate kinase (137 aa).

ATP contacts are provided by lysine 9, phenylalanine 57, arginine 85, threonine 91, arginine 102, and asparagine 112. The active-site Pros-phosphohistidine intermediate is the histidine 115.

It belongs to the NDK family. In terms of assembly, homotetramer. Requires Mg(2+) as cofactor.

The protein localises to the cytoplasm. It carries out the reaction a 2'-deoxyribonucleoside 5'-diphosphate + ATP = a 2'-deoxyribonucleoside 5'-triphosphate + ADP. The catalysed reaction is a ribonucleoside 5'-diphosphate + ATP = a ribonucleoside 5'-triphosphate + ADP. In terms of biological role, major role in the synthesis of nucleoside triphosphates other than ATP. The ATP gamma phosphate is transferred to the NDP beta phosphate via a ping-pong mechanism, using a phosphorylated active-site intermediate. This chain is Nucleoside diphosphate kinase, found in Sulfurovum sp. (strain NBC37-1).